A 381-amino-acid chain; its full sequence is N-acetyldiaminopimelate deacetylase (381 aa).

The active site involves D71. The active-site Proton acceptor is the E130.

It belongs to the peptidase M20A family. N-acetyldiaminopimelate deacetylase subfamily.

The catalysed reaction is N-acetyl-(2S,6S)-2,6-diaminopimelate + H2O = (2S,6S)-2,6-diaminopimelate + acetate. It participates in amino-acid biosynthesis; L-lysine biosynthesis via DAP pathway; LL-2,6-diaminopimelate from (S)-tetrahydrodipicolinate (acetylase route): step 3/3. Functionally, catalyzes the conversion of N-acetyl-diaminopimelate to diaminopimelate and acetate. The sequence is that of N-acetyldiaminopimelate deacetylase from Ligilactobacillus salivarius (strain UCC118) (Lactobacillus salivarius).